Here is an 854-residue protein sequence, read N- to C-terminus: Selenocysteine insertion sequence-binding protein 2 (854 aa).

Disordered regions lie at residues 332 to 351 (ADPK…DPSY), 356 to 394 (HIIH…KYEV), 417 to 445 (ERRD…KKSQ), and 488 to 619 (ECAS…PNHT). Polar residues-rich tracts occupy residues 338–350 (SIPS…SDPS) and 361–372 (TQKSKASQGSDL). The short motif at 380–387 (KNKKKKEK) is the Nuclear localization signal element. The segment covering 426–445 (KFQSKQQPQDNFKNNVKKSQ) has biased composition (polar residues). The span at 536-547 (ILKERQERKQRL) shows a compositional bias: basic and acidic residues. Polar residues predominate over residues 548 to 559 (QENAVSPAFTSD). A compositionally biased stretch (acidic residues) spans 560–572 (DTQDGESGGDDQF). Positions 593-611 (VEDKSEEPPGTELQRDTEA) are enriched in basic and acidic residues. The RNA-binding stretch occupies residues 673–694 (LVLGLREVLKHLKLKKLKCVII). Residues 787-812 (EPRPQAPPSLPTQGPSCPAEDGPPAL) are disordered.

Expressed at high levels in testis.

The protein localises to the nucleus. It localises to the mitochondrion. Functionally, mRNA-binding protein that binds to the SECIS (selenocysteine insertion sequence) element present in the 3'-UTR of mRNAs encoding selenoproteins and facilitates the incorporation of the rare amino acid selenocysteine. Insertion of selenocysteine at UGA codons is mediated by SECISBP2 and EEFSEC: SECISBP2 (1) specifically binds the SECIS sequence once the 80S ribosome encounters an in-frame UGA codon and (2) contacts the RPS27A/eS31 of the 40S ribosome before ribosome stalling. (3) GTP-bound EEFSEC then delivers selenocysteinyl-tRNA(Sec) to the 80S ribosome and adopts a preaccommodated state conformation. (4) After GTP hydrolysis, EEFSEC dissociates from the assembly, selenocysteinyl-tRNA(Sec) accommodates, and peptide bond synthesis and selenoprotein elongation occur. The sequence is that of Selenocysteine insertion sequence-binding protein 2 from Homo sapiens (Human).